The primary structure comprises 292 residues: Cholesterol ring-cleaving hydrolase IpdA subunit (292 aa).

The protein belongs to the 3-oxoacid CoA-transferase subunit A family. As to quaternary structure, heterotetramer composed of 2 IpdA subunits and 2 IpdB subunits.

It carries out the reaction (3E)-2-(2-carboxylatoethyl)-3-methyl-6-oxocyclohex-1-ene-1-carboxyl-CoA + H2O = 6-methyl-3,7-dioxodecanedioyl-CoA. Its pathway is steroid metabolism; cholesterol degradation. Its function is as follows. Involved in the final steps of cholesterol and steroid degradation. Opens the last steroid ring of cholesterol by catalyzing the hydrolysis of (3E)-2-(2-carboxylatoethyl)-3-methyl-6-oxocyclohex-1-ene-1-carboxyl-CoA (COCHEA-CoA) to 6-methyl-3,7-dioxodecanedioyl-CoA (MeDODA-CoA). The sequence is that of Cholesterol ring-cleaving hydrolase IpdA subunit from Mycobacterium tuberculosis (strain CDC 1551 / Oshkosh).